A 98-amino-acid chain; its full sequence is MSPVYFSFSSAFILGLMGLAFNRSHLLSALLCLEGMMLSLFIAIALWSMTLNSTSCSITPMILLTFSACEASAGLALLVAATRTHGSDHLQNLNLLQC.

A run of 3 helical transmembrane segments spans residues 1–21, 26–46, and 61–81; these read MSPV…GLAF, LLSA…AIAL, and MILL…LVAA.

This sequence belongs to the complex I subunit 4L family.

It is found in the mitochondrion membrane. It carries out the reaction a ubiquinone + NADH + 5 H(+)(in) = a ubiquinol + NAD(+) + 4 H(+)(out). Core subunit of the mitochondrial membrane respiratory chain NADH dehydrogenase (Complex I) which catalyzes electron transfer from NADH through the respiratory chain, using ubiquinone as an electron acceptor. Part of the enzyme membrane arm which is embedded in the lipid bilayer and involved in proton translocation. In Squalus acanthias (Spiny dogfish), this protein is NADH-ubiquinone oxidoreductase chain 4L (MT-ND4L).